The following is a 119-amino-acid chain: Large ribosomal subunit protein bL20 (119 aa).

Belongs to the bacterial ribosomal protein bL20 family.

Its function is as follows. Binds directly to 23S ribosomal RNA and is necessary for the in vitro assembly process of the 50S ribosomal subunit. It is not involved in the protein synthesizing functions of that subunit. This chain is Large ribosomal subunit protein bL20, found in Mycoplasma capricolum subsp. capricolum (strain California kid / ATCC 27343 / NCTC 10154).